We begin with the raw amino-acid sequence, 46 residues long: Diuretic hormone (46 aa).

Ile46 is modified (isoleucine amide).

The protein belongs to the sauvagine/corticotropin-releasing factor/urotensin I family.

The protein localises to the secreted. Its function is as follows. Regulation of fluid secretion. Stimulates primary urine secretion by Malpighian tubules and causes a dose-dependent stimulation of cAMP levels in the tubules. The chain is Diuretic hormone from Periplaneta americana (American cockroach).